The following is a 476-amino-acid chain: MEEPFLLQDEHLVPCKDTWKSGQVTVELKKVSSLAAPMAAVTIAQYLLPVISVMVAGHNGELQLSGVALATSFTNVSGFSILFGLAGALETLCGQAYGAKQYEKIGTYTYSATASNIPICVLISVLWIYIEKLLISLGQDPDISRVAGSYALWLIPALFAHAFFIPLTRFLLAQGLVLPLLYCTLTTLLFHIPVCWAFVYAFGLGSNGAAMAISVSFWFYVVILSCYVRYSSSCDKTRVFVSSDFVSCIKQFFHFGVPSAAMVCLEWWLFELLILCSGLLPNPKLETSVLSICLTTASLHYVIPGGVAAAVSTRVSNKLGAGIPQVARVSVLAGLCLWLVESAFFSTLLFTCRNIIGYAFSNSKEVVDYVANLTPLLCLSFILDGFTAVLNGVARGSGWQHIGALNNVVAYYLVGAPVGVYLAFNRELNGKGLWCGVVVGSAVQAIILAFVTASINWKEQAEKARKRMVSSENRLA.

The next 12 membrane-spanning stretches (helical) occupy residues 35–55 (AAPM…SVMV), 66–86 (GVAL…FGLA), 117–137 (IPIC…LISL), 146–166 (VAGS…FFIP), 185–205 (LTTL…FGLG), 208–228 (GAAM…SCYV), 260–280 (AAMV…SGLL), 289–309 (VLSI…GVAA), 331–351 (VLAG…LLFT), 370–390 (VANL…TAVL), 402–422 (IGAL…GVYL), and 433–453 (LWCG…FVTA).

This sequence belongs to the multi antimicrobial extrusion (MATE) (TC 2.A.66.1) family.

Its subcellular location is the membrane. The sequence is that of Protein DETOXIFICATION 3 from Arabidopsis thaliana (Mouse-ear cress).